We begin with the raw amino-acid sequence, 374 residues long: Probable aminopeptidase YDR415C (374 aa).

Residues 1-18 (MRIQSLFVLFNVAIIAWS) form the signal peptide. Residues His177, Asp196, Glu235, Asp262, and His340 each contribute to the Zn(2+) site.

The protein belongs to the peptidase M28 family. M28E subfamily. The cofactor is Zn(2+).

This chain is Probable aminopeptidase YDR415C, found in Saccharomyces cerevisiae (strain ATCC 204508 / S288c) (Baker's yeast).